Consider the following 147-residue polypeptide: UPF0306 protein YhbP (147 aa).

Belongs to the UPF0306 family.

The polypeptide is UPF0306 protein YhbP (Escherichia coli O6:K15:H31 (strain 536 / UPEC)).